We begin with the raw amino-acid sequence, 132 residues long: Small ribosomal subunit protein uS9 (132 aa).

It belongs to the universal ribosomal protein uS9 family.

The protein is Small ribosomal subunit protein uS9 (rpsI) of Mycoplasma pneumoniae (strain ATCC 29342 / M129 / Subtype 1) (Mycoplasmoides pneumoniae).